Here is a 194-residue protein sequence, read N- to C-terminus: GTP cyclohydrolase 1 (194 aa).

3 residues coordinate Zn(2+): Cys-83, His-86, and Cys-155.

The protein belongs to the GTP cyclohydrolase I family. Homomer.

It catalyses the reaction GTP + H2O = 7,8-dihydroneopterin 3'-triphosphate + formate + H(+). It functions in the pathway cofactor biosynthesis; 7,8-dihydroneopterin triphosphate biosynthesis; 7,8-dihydroneopterin triphosphate from GTP: step 1/1. This Streptococcus pyogenes serotype M49 (strain NZ131) protein is GTP cyclohydrolase 1.